The following is a 323-amino-acid chain: Putative HTH-type transcriptional regulatory protein Mbur_1811 (323 aa).

The region spanning 132 to 190 (LKEARMNVSMSLGALASELGVSRRTISKYEEGQMDASIDIVLHLEEILDMALAKSIDIL) is the HTH cro/C1-type domain. The segment at residues 143–162 (LGALASELGVSRRTISKYEE) is a DNA-binding region (H-T-H motif).

This chain is Putative HTH-type transcriptional regulatory protein Mbur_1811, found in Methanococcoides burtonii (strain DSM 6242 / NBRC 107633 / OCM 468 / ACE-M).